The primary structure comprises 52 residues: Phospholamban (52 aa).

Position 1 is an N-acetylmethionine (M1). At 1–31 the chain is on the cytoplasmic side; that stretch reads MEKVQYITRSALRRASTLEVNPQARQRLQEL. Residue S16 is modified to Phosphoserine; by PKA. At T17 the chain carries Phosphothreonine; by CaMK. The helical transmembrane segment at 32–52 threads the bilayer; it reads FVNFCLILICLLLICIIVMLL.

Belongs to the phospholamban family. In terms of assembly, homopentamer. Post-translationally, phosphorylated in response to beta-adrenergic stimulation. Phosphorylation by PKA abolishes the inhibition of ATP2A2-mediated calcium uptake. In terms of tissue distribution, heart.

Its subcellular location is the endoplasmic reticulum membrane. The protein localises to the sarcoplasmic reticulum membrane. The protein resides in the mitochondrion membrane. It localises to the membrane. In terms of biological role, reversibly inhibits the activity of ATP2A2/SERCA2 in cardiac sarcoplasmic reticulum by decreasing the apparent affinity of the ATPase for Ca(2+). Binds preferentially to the ATP-bound E1 conformational form of ATP2A2 which predominates at low Ca(2+) concentrations during the diastolic phase of the cardiac cycle. Inhibits ATP2A2 Ca(2+) affinity by disrupting its allosteric activation by ATP. Modulates the contractility of the heart muscle in response to physiological stimuli via its effects on ATP2A2. Modulates calcium re-uptake during muscle relaxation and plays an important role in calcium homeostasis in the heart muscle. The degree of ATP2A2 inhibition depends on the oligomeric state of PLN. ATP2A2 inhibition is alleviated by PLN phosphorylation. The chain is Phospholamban (PLN) from Gallus gallus (Chicken).